Here is a 218-residue protein sequence, read N- to C-terminus: Glycerol-3-phosphate acyltransferase (218 aa).

Transmembrane regions (helical) follow at residues F3–A23, G53–I73, F82–F102, L112–V132, I142–L162, and E166–H186.

Belongs to the PlsY family. In terms of assembly, probably interacts with PlsX.

Its subcellular location is the cell inner membrane. It catalyses the reaction an acyl phosphate + sn-glycerol 3-phosphate = a 1-acyl-sn-glycero-3-phosphate + phosphate. It participates in lipid metabolism; phospholipid metabolism. Functionally, catalyzes the transfer of an acyl group from acyl-phosphate (acyl-PO(4)) to glycerol-3-phosphate (G3P) to form lysophosphatidic acid (LPA). This enzyme utilizes acyl-phosphate as fatty acyl donor, but not acyl-CoA or acyl-ACP. The polypeptide is Glycerol-3-phosphate acyltransferase (Leptospira borgpetersenii serovar Hardjo-bovis (strain JB197)).